Consider the following 147-residue polypeptide: Large ribosomal subunit protein bL9 (147 aa).

The protein belongs to the bacterial ribosomal protein bL9 family.

In terms of biological role, binds to the 23S rRNA. This is Large ribosomal subunit protein bL9 from Flavobacterium psychrophilum (strain ATCC 49511 / DSM 21280 / CIP 103535 / JIP02/86).